Here is a 282-residue protein sequence, read N- to C-terminus: MSQPNVSVKVGNVVFSNKAPLSLIVGPCQIESRDHAFEMAGRIKAIADQAGIGFVYKSSYDKANRTSLSAARGIGLEKAIAIFADLKKEFGFPILTDVHTEEQCRAVSSVVDVLQIPAFLCRQTDLLVAAAKTGCVINIKKGQFLAPWDMENVLKKVTQSGNPDVMLCERGTSFGYNRLVSDMRSLPIMSSFGAPVIFDATHSVQEPGGKGDSSGGQRQFVEILARAAVAVGVAGIFLETHQDPDNAPSDGANMIEIDNLQRLIEILMNFDRLTKNELNIHA.

Belongs to the KdsA family.

Its subcellular location is the cytoplasm. It catalyses the reaction D-arabinose 5-phosphate + phosphoenolpyruvate + H2O = 3-deoxy-alpha-D-manno-2-octulosonate-8-phosphate + phosphate. It functions in the pathway carbohydrate biosynthesis; 3-deoxy-D-manno-octulosonate biosynthesis; 3-deoxy-D-manno-octulosonate from D-ribulose 5-phosphate: step 2/3. The protein operates within bacterial outer membrane biogenesis; lipopolysaccharide biosynthesis. This is 2-dehydro-3-deoxyphosphooctonate aldolase from Bartonella bacilliformis (strain ATCC 35685 / KC583 / Herrer 020/F12,63).